The chain runs to 513 residues: MQLNSTEISELIKQRIVEFDLTSIIYNEGIILSVIDGIIRIHGLSEVMQGEMIALPGNSFAIALNLERDEVGAVVMGPYSHLTEGMKVKCTGRILEVPVGHSLLGRIVNTLGIPIDGKGKLENKLFSPIETNAPNVIERQSISEPIQTGYKSIDAMIPIGRGQRELIIGDRQTGKSTLAIDTIINQRNSDIKCIYVAIGQKASTINNVVQKLEEHNALINTIIVTATASDSVALQYLAPYAGCVMGEYFRNIGENALVIYDDLSKQAIAYRQISLLLRRPPGREAYPGDIFYLHSRLLERAARVSANYVETYTKGKIKGKTGSLTALPIIETQAGDVSSFIPTNVISITDGQIFLESSLFNAGIRPAVNPGISVSRVGSAAQTKIIKTVSSGIRTTLAQYRELEAFSQFASDLDEVTRKQINYGKKVTELLKQKQHMPMSVSQQALVLFAAEQGYLEDINLKKINDFETQLLLYVKHQYHDFMKIIDQEGNYNDDIEKTLTEIISKFKTNASF.

Residue 169-176 (GDRQTGKS) participates in ATP binding.

Belongs to the ATPase alpha/beta chains family. As to quaternary structure, F-type ATPases have 2 components, CF(1) - the catalytic core - and CF(0) - the membrane proton channel. CF(1) has five subunits: alpha(3), beta(3), gamma(1), delta(1), epsilon(1). CF(0) has three main subunits: a(1), b(2) and c(9-12). The alpha and beta chains form an alternating ring which encloses part of the gamma chain. CF(1) is attached to CF(0) by a central stalk formed by the gamma and epsilon chains, while a peripheral stalk is formed by the delta and b chains.

The protein localises to the cell membrane. It carries out the reaction ATP + H2O + 4 H(+)(in) = ADP + phosphate + 5 H(+)(out). In terms of biological role, produces ATP from ADP in the presence of a proton gradient across the membrane. The alpha chain is a regulatory subunit. The sequence is that of ATP synthase subunit alpha from Baumannia cicadellinicola subsp. Homalodisca coagulata.